The primary structure comprises 727 residues: Elongation factor 2 (727 aa).

A tr-type G domain is found at 19–260 (DQIRNMGICA…MSIKHLPNPL (242 aa)). GTP-binding positions include 28–35 (AHIDHGKT), 94–98 (DTPGH), and 148–151 (NKVD). Histidine 603 is modified (diphthamide).

The protein belongs to the TRAFAC class translation factor GTPase superfamily. Classic translation factor GTPase family. EF-G/EF-2 subfamily.

The protein resides in the cytoplasm. Functionally, catalyzes the GTP-dependent ribosomal translocation step during translation elongation. During this step, the ribosome changes from the pre-translocational (PRE) to the post-translocational (POST) state as the newly formed A-site-bound peptidyl-tRNA and P-site-bound deacylated tRNA move to the P and E sites, respectively. Catalyzes the coordinated movement of the two tRNA molecules, the mRNA and conformational changes in the ribosome. This Methanococcus maripaludis (strain C5 / ATCC BAA-1333) protein is Elongation factor 2.